Reading from the N-terminus, the 111-residue chain is Cell division protein FtsB (111 aa).

Topologically, residues 1 to 3 are cytoplasmic; the sequence is MRL. A helical membrane pass occupies residues 4–21; it reads ITLFLLLLLLAIQYPLWL. The Periplasmic portion of the chain corresponds to 22-111; that stretch reads GKGGWLRVWD…PAALQPNHRH (90 aa). Residues 28–64 are a coiled coil; it reads RVWDMQKQVASQNQRNAELKQRNLKLEGEVKDLKEGT. The interval 90 to 111 is disordered; it reads PAPKTSETPLPPPAALQPNHRH.

The protein belongs to the FtsB family. Part of a complex composed of FtsB, FtsL and FtsQ.

It is found in the cell inner membrane. Its function is as follows. Essential cell division protein. May link together the upstream cell division proteins, which are predominantly cytoplasmic, with the downstream cell division proteins, which are predominantly periplasmic. The sequence is that of Cell division protein FtsB from Ralstonia nicotianae (strain ATCC BAA-1114 / GMI1000) (Ralstonia solanacearum).